The following is a 1279-amino-acid chain: Botulinum-like toxin eBoNT/J (1279 aa).

His-225 provides a ligand contact to Zn(2+). Residue Glu-226 is part of the active site. Zn(2+) contacts are provided by His-229 and Glu-269. Cys-424 and Cys-438 form a disulfide bridge. Residues 435-843 form a translocation domain (TD) region; it reads LSSCIEILED…RLTSLPVFNL (409 aa). A belt; not required for channel formation region spans residues 476–525; that stretch reads ADTILDSTLSNYDFSKEINFTSTVPIITVEDPLETDEDVPVISEDRTVYV. An N-terminus of receptor binding domain (N-RBD) region spans residues 860-1080; the sequence is IDIQDSEVLN…EVNRLYWKYF (221 aa). The tract at residues 1081-1279 is C-terminus of receptor binding domain (C-RBD); it reads EGSYLRDVWG…IPVDEGWKED (199 aa). A Host ganglioside-binding motif motif is present at residues 1250 to 1253; that stretch reads SAWY.

This sequence belongs to the peptidase M27 family. Might be a disulfide-linked heterodimer of a light chain (LC) and heavy chain (HC). The cofactor is Zn(2+).

It localises to the secreted. The protein resides in the host cytoplasm. Its subcellular location is the host cytosol. The protein localises to the host cell membrane. It is found in the host cytoplasmic vesicle membrane. It carries out the reaction Limited hydrolysis of proteins of the neuroexocytosis apparatus, synaptobrevins, SNAP25 or syntaxin. No detected action on small molecule substrates.. Its function is as follows. Strongly resembles a botulinum-type toxin, with the appropriate domains and residues to have proteolytic function, although its C-terminus (which binds to a eukaryotic host cell) is different enough from clostrial botulinum toxins that it might bind another cell target. Might be a precursor of a toxin that binds to an unknown eukaryotic cell receptor(s), and be taken up into the host cell via the endocytic pathway. When the pH of the putative toxin-containing endosome drops a structural rearrangement occurs so that the N-terminus of the heavy chain forms pores that allows the light chain to translocate into the cytosol. Once in the cytosol the disulfide bond linking the 2 subunits is reduced and light chain cleaves its target protein. The protein is Botulinum-like toxin eBoNT/J of Enterococcus sp. (strain 3G1_DIV0629).